The following is a 248-amino-acid chain: Small ribosomal subunit protein uS2 (248 aa).

This sequence belongs to the universal ribosomal protein uS2 family.

The protein is Small ribosomal subunit protein uS2 of Alkalilimnicola ehrlichii (strain ATCC BAA-1101 / DSM 17681 / MLHE-1).